The chain runs to 339 residues: 3-isopropylmalate dehydrogenase (339 aa).

Substrate contacts are provided by Arg-88, Arg-98, Arg-122, and Asp-212. Asp-212, Asp-236, and Asp-240 together coordinate Mg(2+). 272–284 (GSAPDIAGKGIAD) contributes to the NAD(+) binding site.

This sequence belongs to the isocitrate and isopropylmalate dehydrogenases family. LeuB type 2 subfamily. In terms of assembly, homodimer. Requires Mg(2+) as cofactor. Mn(2+) is required as a cofactor.

It localises to the cytoplasm. It catalyses the reaction (2R,3S)-3-isopropylmalate + NAD(+) = 4-methyl-2-oxopentanoate + CO2 + NADH. It functions in the pathway amino-acid biosynthesis; L-leucine biosynthesis; L-leucine from 3-methyl-2-oxobutanoate: step 3/4. Functionally, catalyzes the oxidation of 3-carboxy-2-hydroxy-4-methylpentanoate (3-isopropylmalate) to 3-carboxy-4-methyl-2-oxopentanoate. The product decarboxylates to 4-methyl-2 oxopentanoate. This Corynebacterium aurimucosum (strain ATCC 700975 / DSM 44827 / CIP 107346 / CN-1) (Corynebacterium nigricans) protein is 3-isopropylmalate dehydrogenase.